Reading from the N-terminus, the 1128-residue chain is MASEEASLRALESLMTEFFHSCTTNDRKREIEELLNSFAGQPGSWRHWLYFLSNSRNEYVMMYSLTVFENLVNKMWVGVASEDKAELRSCLPKLLLSQHALLPFFIRNKLCKVIVDIGRQDWPMFYHDFFSNTLQLVQSPSLASLGLVLLKMTSEELVCPREDLSVARKDELKKLLLDQIPTVLNLLTRILETVWDKHSVTVTTPPPSPTSRESGVMLGDSTPMVLDAESGALCLLALECLAHLFSWIPLSSSITPSLLASIFHFARFGCQQPIKTKPLPTSNGDSAPGSLPANGGGHCRTGQIVGHAERARLGVMAMNCINELMCKNCVPVDFEEFLLRMFQQTFYLLQRLTNTHSHTNTHTIKSRLQDLDESYVEKFTDFLRLFVSVHLRRIESNAQFPLVEFLALLFKYTFNQPSHEGYLACLDIWSVFLDYLTTKIRSRLADRDSVINRYKDALVLLLREVLNRIQFRLNQSQLEELDDETLDDDQQTEWQRYLRQSLEVVARVMELLPSQTFSVLFPVLQEDLDVYLGLQQFIVRSGTSRRLNITAEADCRKLHCALRDLSSLLQAVGRLAEFFTGDVFTARFNDALAIVQRLVEVSCYGSQISLYDVEMAVPSVLKPDLIDVHAQSLAALQAYSHWLAQFCGEVQRQQDQTQFVDLITSSMAAASPLINGKVPEKLLLSACHLLVSMATTVRPVFLVSLPAVQNIFNLITENHNHRLPQEAHVLVCRALSNMLLLPWPSLPEGEQQWPNRSANHARLISSLTQQYRLLPRPPNHHHTSKAVIQQTLCVLRDLVDSISGEATKSRQICYHSLQESVQVSLALFPLFIQQPEVTDEMLSFFLTLFQALRVQMGVAFTEQIIQTFLSMFTREQLAVGILQEGSSGSKVVQKFLKILQVVVQEPGQTFKPLLPSILSLCLDQVYPIVAERSCPDVRAEMFELLFQILHQNWRFFFKSSVLSSVQRSGAEELMENQAQFTAAMQAFGQSFLQPDIHIFKQNLSYLEVLNTKHKLYHRKLFRNAMLFHFINVLLQVLLHKSHDLLQEDITLALYNMAAVDFSAFYSSFLPEFLNGCQGLDPHQRTTLARNFTPERDLPSFSQGVYRIVNDLRFYRLCNGSLPPGTLKL.

The Importin N-terminal domain maps to 31 to 97 (IEELLNSFAG…RSCLPKLLLS (67 aa)).

It belongs to the exportin family.

It localises to the nucleus. The protein resides in the cytoplasm. Its function is as follows. Mediates the nuclear export of actin and profilin-actin complexes in somatic cells. This Danio rerio (Zebrafish) protein is Exportin-6 (xpo6).